The following is a 343-amino-acid chain: Heat-inducible transcription repressor HrcA (343 aa).

It belongs to the HrcA family.

Functionally, negative regulator of class I heat shock genes (grpE-dnaK-dnaJ and groELS operons). Prevents heat-shock induction of these operons. This Mycobacterium avium (strain 104) protein is Heat-inducible transcription repressor HrcA.